The primary structure comprises 185 residues: Elongation factor P (185 aa).

Belongs to the elongation factor P family.

Its subcellular location is the cytoplasm. It functions in the pathway protein biosynthesis; polypeptide chain elongation. Functionally, involved in peptide bond synthesis. Stimulates efficient translation and peptide-bond synthesis on native or reconstituted 70S ribosomes in vitro. Probably functions indirectly by altering the affinity of the ribosome for aminoacyl-tRNA, thus increasing their reactivity as acceptors for peptidyl transferase. The chain is Elongation factor P from Methylobacillus flagellatus (strain ATCC 51484 / DSM 6875 / VKM B-1610 / KT).